We begin with the raw amino-acid sequence, 208 residues long: 3-demethoxyubiquinol 3-hydroxylase (208 aa).

Residues Glu-57, Glu-87, His-90, Glu-139, Glu-171, and His-174 each coordinate Fe cation.

This sequence belongs to the COQ7 family. It depends on Fe cation as a cofactor.

The protein resides in the cell membrane. It carries out the reaction a 5-methoxy-2-methyl-3-(all-trans-polyprenyl)benzene-1,4-diol + AH2 + O2 = a 3-demethylubiquinol + A + H2O. It functions in the pathway cofactor biosynthesis; ubiquinone biosynthesis. Functionally, catalyzes the hydroxylation of 2-nonaprenyl-3-methyl-6-methoxy-1,4-benzoquinol during ubiquinone biosynthesis. The protein is 3-demethoxyubiquinol 3-hydroxylase of Burkholderia thailandensis (strain ATCC 700388 / DSM 13276 / CCUG 48851 / CIP 106301 / E264).